The sequence spans 183 residues: Phospholipase A2 inhibitor gamma subunit A1 (183 aa).

Cystine bridges form between Cys3/Cys28, Cys6/Cys13, Cys21/Cys49, Cys55/Cys76, Cys77/Cys82, Cys100/Cys125, Cys118/Cys147, and Cys151/Cys173. N-linked (GlcNAc...) asparagine glycosylation is present at Asn158.

The protein belongs to the CNF-like-inhibitor family. Heterodimer of subunit A and subunit B. As to expression, expressed by the liver.

The protein localises to the secreted. In terms of biological role, phospholipase A2 (PA2) inhibitor. Inhibits the enzymatic activity of PA2 of Deinagkistrodon acutus. Also shows a wide anti-hemorrhage activities to D.acutus, Naja atra and Agkistrodon halys venom. The native protein is more potent than the recombinant one. This is Phospholipase A2 inhibitor gamma subunit A1 from Trimerodytes annularis (Red-bellied annulate keelback).